We begin with the raw amino-acid sequence, 457 residues long: Bifunctional protein GlmU (457 aa).

Residues 1-230 (MPLSLPLHIV…PREVEGVNDL (230 aa)) form a pyrophosphorylase region. Residues 12-15 (LAAG), lysine 26, glutamine 78, 83-84 (GT), 105-107 (YGD), glycine 140, glutamate 155, asparagine 170, and asparagine 228 contribute to the UDP-N-acetyl-alpha-D-glucosamine site. Aspartate 107 serves as a coordination point for Mg(2+). Asparagine 228 is a Mg(2+) binding site. Residues 231–251 (WQLTQLERTWQIRAARALCLQ) are linker. Residues 252 to 457 (GARVADPARL…DGWQRPKKKT (206 aa)) are N-acetyltransferase. Positions 334 and 352 each coordinate UDP-N-acetyl-alpha-D-glucosamine. The active-site Proton acceptor is the histidine 364. UDP-N-acetyl-alpha-D-glucosamine is bound by residues tyrosine 367 and asparagine 378. Residues alanine 381, 387 to 388 (NY), serine 406, alanine 424, and arginine 441 each bind acetyl-CoA.

The protein in the N-terminal section; belongs to the N-acetylglucosamine-1-phosphate uridyltransferase family. This sequence in the C-terminal section; belongs to the transferase hexapeptide repeat family. As to quaternary structure, homotrimer. Mg(2+) serves as cofactor.

It is found in the cytoplasm. The enzyme catalyses alpha-D-glucosamine 1-phosphate + acetyl-CoA = N-acetyl-alpha-D-glucosamine 1-phosphate + CoA + H(+). The catalysed reaction is N-acetyl-alpha-D-glucosamine 1-phosphate + UTP + H(+) = UDP-N-acetyl-alpha-D-glucosamine + diphosphate. The protein operates within nucleotide-sugar biosynthesis; UDP-N-acetyl-alpha-D-glucosamine biosynthesis; N-acetyl-alpha-D-glucosamine 1-phosphate from alpha-D-glucosamine 6-phosphate (route II): step 2/2. It participates in nucleotide-sugar biosynthesis; UDP-N-acetyl-alpha-D-glucosamine biosynthesis; UDP-N-acetyl-alpha-D-glucosamine from N-acetyl-alpha-D-glucosamine 1-phosphate: step 1/1. Its pathway is bacterial outer membrane biogenesis; LPS lipid A biosynthesis. Its function is as follows. Catalyzes the last two sequential reactions in the de novo biosynthetic pathway for UDP-N-acetylglucosamine (UDP-GlcNAc). The C-terminal domain catalyzes the transfer of acetyl group from acetyl coenzyme A to glucosamine-1-phosphate (GlcN-1-P) to produce N-acetylglucosamine-1-phosphate (GlcNAc-1-P), which is converted into UDP-GlcNAc by the transfer of uridine 5-monophosphate (from uridine 5-triphosphate), a reaction catalyzed by the N-terminal domain. The polypeptide is Bifunctional protein GlmU (Xylella fastidiosa (strain M12)).